A 204-amino-acid chain; its full sequence is FMN-dependent NADH:quinone oxidoreductase (204 aa).

Residues Ser-9, 15–17, 95–98, and 139–142 contribute to the FMN site; these read SVS, MYNF, and SRGG.

This sequence belongs to the azoreductase type 1 family. In terms of assembly, homodimer. It depends on FMN as a cofactor.

The catalysed reaction is 2 a quinone + NADH + H(+) = 2 a 1,4-benzosemiquinone + NAD(+). It carries out the reaction N,N-dimethyl-1,4-phenylenediamine + anthranilate + 2 NAD(+) = 2-(4-dimethylaminophenyl)diazenylbenzoate + 2 NADH + 2 H(+). In terms of biological role, quinone reductase that provides resistance to thiol-specific stress caused by electrophilic quinones. Functionally, also exhibits azoreductase activity. Catalyzes the reductive cleavage of the azo bond in aromatic azo compounds to the corresponding amines. The protein is FMN-dependent NADH:quinone oxidoreductase of Methylocella silvestris (strain DSM 15510 / CIP 108128 / LMG 27833 / NCIMB 13906 / BL2).